The chain runs to 353 residues: Mannonate dehydratase (353 aa).

The protein belongs to the mannonate dehydratase family. Requires Fe(2+) as cofactor. The cofactor is Mn(2+).

It catalyses the reaction D-mannonate = 2-dehydro-3-deoxy-D-gluconate + H2O. It participates in carbohydrate metabolism; pentose and glucuronate interconversion. In terms of biological role, catalyzes the dehydration of D-mannonate. This chain is Mannonate dehydratase, found in Burkholderia cenocepacia (strain ATCC BAA-245 / DSM 16553 / LMG 16656 / NCTC 13227 / J2315 / CF5610) (Burkholderia cepacia (strain J2315)).